The sequence spans 342 residues: Farnesyl pyrophosphate synthase 2 (342 aa).

Isopentenyl diphosphate is bound by residues Lys47, Arg50, and Gln86. 2 residues coordinate Mg(2+): Asp93 and Asp97. Arg102 contributes to the dimethylallyl diphosphate binding site. Position 103 (Arg103) interacts with isopentenyl diphosphate. 5 residues coordinate dimethylallyl diphosphate: Lys190, Thr191, Gln229, Lys246, and Lys255.

It belongs to the FPP/GGPP synthase family. Requires Mg(2+) as cofactor.

It is found in the cytoplasm. The enzyme catalyses isopentenyl diphosphate + dimethylallyl diphosphate = (2E)-geranyl diphosphate + diphosphate. It carries out the reaction isopentenyl diphosphate + (2E)-geranyl diphosphate = (2E,6E)-farnesyl diphosphate + diphosphate. The protein operates within isoprenoid biosynthesis; farnesyl diphosphate biosynthesis; farnesyl diphosphate from geranyl diphosphate and isopentenyl diphosphate: step 1/1. Its pathway is isoprenoid biosynthesis; geranyl diphosphate biosynthesis; geranyl diphosphate from dimethylallyl diphosphate and isopentenyl diphosphate: step 1/1. Functionally, catalyzes the sequential condensation of isopentenyl pyrophosphate with the allylic pyrophosphates, dimethylallyl pyrophosphate, and then with the resultant geranylpyrophosphate to the ultimate product farnesyl pyrophosphate. In Arabidopsis thaliana (Mouse-ear cress), this protein is Farnesyl pyrophosphate synthase 2 (FPS2).